Reading from the N-terminus, the 412-residue chain is Gamma-glutamyl phosphate reductase (412 aa).

This sequence belongs to the gamma-glutamyl phosphate reductase family.

It is found in the cytoplasm. The catalysed reaction is L-glutamate 5-semialdehyde + phosphate + NADP(+) = L-glutamyl 5-phosphate + NADPH + H(+). The protein operates within amino-acid biosynthesis; L-proline biosynthesis; L-glutamate 5-semialdehyde from L-glutamate: step 2/2. In terms of biological role, catalyzes the NADPH-dependent reduction of L-glutamate 5-phosphate into L-glutamate 5-semialdehyde and phosphate. The product spontaneously undergoes cyclization to form 1-pyrroline-5-carboxylate. This Bartonella henselae (strain ATCC 49882 / DSM 28221 / CCUG 30454 / Houston 1) (Rochalimaea henselae) protein is Gamma-glutamyl phosphate reductase.